A 20-amino-acid chain; its full sequence is Cuticle-degrading protease-like protein (20 aa).

The interval 1 to 20 (AIVEQQGAPXGLGRIINKXK) is disordered.

This sequence belongs to the peptidase S8 family.

The protein resides in the secreted. Functionally, capable of breaching the insect cuticle. This is Cuticle-degrading protease-like protein from Metacordyceps chlamydosporia (Nematophagous fungus).